The sequence spans 267 residues: Glucosamine-6-phosphate deaminase (267 aa).

Residue Asp-72 is the Proton acceptor; for enolization step of the active site. The active-site For ring-opening step is Asp-141. His-143 functions as the Proton acceptor; for ring-opening step in the catalytic mechanism. The active-site For ring-opening step is the Glu-148.

The protein belongs to the glucosamine/galactosamine-6-phosphate isomerase family. NagB subfamily. As to quaternary structure, homohexamer.

The catalysed reaction is alpha-D-glucosamine 6-phosphate + H2O = beta-D-fructose 6-phosphate + NH4(+). The protein operates within amino-sugar metabolism; N-acetylneuraminate degradation; D-fructose 6-phosphate from N-acetylneuraminate: step 5/5. With respect to regulation, allosterically activated by N-acetylglucosamine 6-phosphate (GlcNAc6P). Catalyzes the reversible isomerization-deamination of glucosamine 6-phosphate (GlcN6P) to form fructose 6-phosphate (Fru6P) and ammonium ion. The protein is Glucosamine-6-phosphate deaminase of Pasteurella multocida (strain Pm70).